A 1442-amino-acid polypeptide reads, in one-letter code: Sulfite reductase [NADPH] subunit beta (1442 aa).

Residues 682 to 831 (LHVYYASDGG…AYSEWEPKLW (150 aa)) form the Flavodoxin-like domain. S903 is modified (phosphoserine). [4Fe-4S] cluster contacts are provided by C1300, C1306, C1345, and C1349. Residue C1349 coordinates siroheme.

Belongs to the nitrite and sulfite reductase 4Fe-4S domain family. In terms of assembly, alpha(2)-beta(2). The alpha component is a flavoprotein, the beta component is a hemoprotein. It depends on siroheme as a cofactor. [4Fe-4S] cluster serves as cofactor.

The protein localises to the cytoplasm. It carries out the reaction hydrogen sulfide + 3 NADP(+) + 3 H2O = sulfite + 3 NADPH + 4 H(+). Its pathway is sulfur metabolism; hydrogen sulfide biosynthesis; hydrogen sulfide from sulfite (NADPH route): step 1/1. Its function is as follows. Catalyzes the reduction of sulfite to sulfide, one of several activities required for the biosynthesis of L-cysteine from sulfate. This chain is Sulfite reductase [NADPH] subunit beta (MET5), found in Saccharomyces cerevisiae (strain ATCC 204508 / S288c) (Baker's yeast).